The sequence spans 232 residues: Heptaprenylglyceryl phosphate synthase (232 aa).

Lys-12 is a binding site for sn-glycerol 1-phosphate. Residues Asp-14 and Thr-40 each coordinate Mg(2+). Residues 159–164 (YLEYSG), Gly-189, and 209–210 (GN) each bind sn-glycerol 1-phosphate.

Belongs to the GGGP/HepGP synthase family. Group I subfamily. In terms of assembly, homodimer. Requires Mg(2+) as cofactor.

It carries out the reaction sn-glycerol 1-phosphate + all-trans-heptaprenyl diphosphate = 3-heptaprenyl-sn-glycero-1-phosphate + diphosphate. The protein operates within membrane lipid metabolism; glycerophospholipid metabolism. Its function is as follows. Prenyltransferase that catalyzes in vivo the transfer of the heptaprenyl moiety of heptaprenyl pyrophosphate (HepPP; 35 carbon atoms) to the C3 hydroxyl of sn-glycerol-1-phosphate (G1P), producing heptaprenylglyceryl phosphate (HepGP). This reaction is an ether-bond-formation step in the biosynthesis of archaea-type G1P-based membrane lipids found in Bacillales. The polypeptide is Heptaprenylglyceryl phosphate synthase (Shouchella clausii (strain KSM-K16) (Alkalihalobacillus clausii)).